The chain runs to 240 residues: MADEERLKEFKEANKIVFDPNTRQVWENQNRDGTKPATTFQSEEDIKRAAPESEKDTSATSGIVPTLQNIVATVTLGCRLDLKTVALHARNAEYNPKRFAAVIMRIREPKTTALIFASGKMVVTGAKSEDDSKLASRKYARIIQKIGFAAKFTDFKIQNIVGSCDVKFPIRLEGLAFSHGTFSSYEPELFPGLIYRMVKPKIVLLIFVSGKIVLTGAKQREEIYQAFEAIYPVLSEFRKM.

Residues 21-61 (NTRQVWENQNRDGTKPATTFQSEEDIKRAAPESEKDTSATS) are disordered. A compositionally biased stretch (basic and acidic residues) spans 44–57 (EDIKRAAPESEKDT). Tandem repeats lie at residues 67-143 (LQNI…ARII) and 157-234 (IQNI…YPVL).

It belongs to the TBP family. As to quaternary structure, binds DNA as monomer. The 1.2 MDa TFIID complex is composed of TATA binding protein (TBP) and the 14 TBP-associated factors. One copy of each TAF1, TAF2, TAF3, TAF7, TAF8, TAF11, TAF13, two copies of each TAF4, TAF5, TAF6, TAF9, TAF10, TAF12, and three copies of TAF14. Interacts with TFC8.

It localises to the nucleus. Functionally, general transcription factor that functions at the core of the DNA-binding general transcription factor complex TFIID. Binding of TFIID to a promoter (with or without TATA element) is the initial step in preinitiation complex (PIC) formation. TFIID plays a key role in the regulation of gene expression by RNA polymerase II through different activities such as transcription activator interaction, core promoter recognition and selectivity, TFIIA and TFIIB interaction, chromatin modification (histone acetylation by TAF1), facilitation of DNA opening and initiation of transcription. The sequence is that of TATA-box-binding protein (SPT15) from Saccharomyces cerevisiae (strain ATCC 204508 / S288c) (Baker's yeast).